Consider the following 696-residue polypeptide: Elongation factor G (696 aa).

In terms of domain architecture, tr-type G spans 8 to 290 (ERYRNIGIMA…AVLDYLPSPL (283 aa)). Residues 17–24 (AHIDAGKT), 88–92 (DTPGH), and 142–145 (NKMD) contribute to the GTP site.

The protein belongs to the TRAFAC class translation factor GTPase superfamily. Classic translation factor GTPase family. EF-G/EF-2 subfamily.

It is found in the cytoplasm. In terms of biological role, catalyzes the GTP-dependent ribosomal translocation step during translation elongation. During this step, the ribosome changes from the pre-translocational (PRE) to the post-translocational (POST) state as the newly formed A-site-bound peptidyl-tRNA and P-site-bound deacylated tRNA move to the P and E sites, respectively. Catalyzes the coordinated movement of the two tRNA molecules, the mRNA and conformational changes in the ribosome. The protein is Elongation factor G of Nitrosomonas eutropha (strain DSM 101675 / C91 / Nm57).